The chain runs to 248 residues: Probable transcriptional regulatory protein RPE_4771 (248 aa).

Residues 1–21 are disordered; sequence MAGHSQFKNIMHRKGRQDAQK.

This sequence belongs to the TACO1 family.

The protein localises to the cytoplasm. This Rhodopseudomonas palustris (strain BisA53) protein is Probable transcriptional regulatory protein RPE_4771.